The primary structure comprises 471 residues: UDP-N-acetylmuramate--L-alanine ligase (471 aa).

Residue 114-120 (GTHGKTT) participates in ATP binding.

Belongs to the MurCDEF family.

Its subcellular location is the cytoplasm. It carries out the reaction UDP-N-acetyl-alpha-D-muramate + L-alanine + ATP = UDP-N-acetyl-alpha-D-muramoyl-L-alanine + ADP + phosphate + H(+). It participates in cell wall biogenesis; peptidoglycan biosynthesis. Cell wall formation. The polypeptide is UDP-N-acetylmuramate--L-alanine ligase (Rhizobium johnstonii (strain DSM 114642 / LMG 32736 / 3841) (Rhizobium leguminosarum bv. viciae)).